Consider the following 447-residue polypeptide: RNA-binding protein 208 (447 aa).

RRM domains are found at residues 73–147 (RSVY…WAYA) and 158–236 (FHIF…WATK). Positions 254 to 269 (TNGSSSNPGMEASQDT) are enriched in polar residues. Disordered stretches follow at residues 254 to 279 (TNGS…ENNP) and 353 to 372 (WGNK…PPLP). The 75-residue stretch at 282–356 (TTVYVGNLGH…KPIKCSWGNK (75 aa)) folds into the RRM 3 domain.

As to quaternary structure, interacts with RBP-P.

Its function is as follows. RNA-binding protein. The polypeptide is RNA-binding protein 208 (Oryza sativa subsp. japonica (Rice)).